The primary structure comprises 236 residues: Biosynthetic peptidoglycan transglycosylase (236 aa).

A helical membrane pass occupies residues 17-37 (IVILVALALLALPYLLTILYG).

This sequence belongs to the glycosyltransferase 51 family.

It localises to the cell inner membrane. The catalysed reaction is [GlcNAc-(1-&gt;4)-Mur2Ac(oyl-L-Ala-gamma-D-Glu-L-Lys-D-Ala-D-Ala)](n)-di-trans,octa-cis-undecaprenyl diphosphate + beta-D-GlcNAc-(1-&gt;4)-Mur2Ac(oyl-L-Ala-gamma-D-Glu-L-Lys-D-Ala-D-Ala)-di-trans,octa-cis-undecaprenyl diphosphate = [GlcNAc-(1-&gt;4)-Mur2Ac(oyl-L-Ala-gamma-D-Glu-L-Lys-D-Ala-D-Ala)](n+1)-di-trans,octa-cis-undecaprenyl diphosphate + di-trans,octa-cis-undecaprenyl diphosphate + H(+). The protein operates within cell wall biogenesis; peptidoglycan biosynthesis. Its function is as follows. Peptidoglycan polymerase that catalyzes glycan chain elongation from lipid-linked precursors. The sequence is that of Biosynthetic peptidoglycan transglycosylase from Rhodopseudomonas palustris (strain ATCC BAA-98 / CGA009).